Consider the following 166-residue polypeptide: Large ribosomal subunit protein uL10 (166 aa).

Belongs to the universal ribosomal protein uL10 family. In terms of assembly, part of the ribosomal stalk of the 50S ribosomal subunit. The N-terminus interacts with L11 and the large rRNA to form the base of the stalk. The C-terminus forms an elongated spine to which L12 dimers bind in a sequential fashion forming a multimeric L10(L12)X complex.

In terms of biological role, forms part of the ribosomal stalk, playing a central role in the interaction of the ribosome with GTP-bound translation factors. The protein is Large ribosomal subunit protein uL10 of Hydrogenovibrio crunogenus (strain DSM 25203 / XCL-2) (Thiomicrospira crunogena).